The primary structure comprises 64 residues: uncharacterized protein (64 aa).

Positions 1–14 are enriched in polar residues; it reads MFNFDPTDQPTDQH. The interval 1 to 42 is disordered; that stretch reads MFNFDPTDQPTDQHLLQLPTDPHPLQQPIDPHPPPQPNNNLP.

This is an uncharacterized protein from Dictyostelium discoideum (Social amoeba).